We begin with the raw amino-acid sequence, 342 residues long: Nucleoid-associated protein SO_2177 (342 aa).

It belongs to the YejK family.

Its subcellular location is the cytoplasm. It is found in the nucleoid. This is Nucleoid-associated protein SO_2177 from Shewanella oneidensis (strain ATCC 700550 / JCM 31522 / CIP 106686 / LMG 19005 / NCIMB 14063 / MR-1).